A 333-amino-acid chain; its full sequence is 4-hydroxyproline epimerase (333 aa).

Residue C90 is the Proton acceptor of the active site. Substrate is bound by residues 91 to 92 (GH) and D249. Catalysis depends on C253, which acts as the Proton donor. 254 to 255 (GT) serves as a coordination point for substrate.

Belongs to the proline racemase family. As to quaternary structure, homodimer.

The catalysed reaction is trans-4-hydroxy-L-proline = cis-4-hydroxy-D-proline. Functionally, allows intracellular utilization of 4-hydroxyproline, one of the major constituents of host collagen, by converting 4-hydroxy-L-proline to 4-hydroxy-D-proline, which can be further metabolized by intracellular 4-hydroxy-D-proline oxidases. Strong B-cell mitogen. Plays an important role in the regulation of intra- and extracellular amino acid pools, allowing the bacterium to profit from host precursors and enzymatic pathways. In Brucella suis (strain ATCC 23445 / NCTC 10510), this protein is 4-hydroxyproline epimerase.